A 277-amino-acid chain; its full sequence is Glutamate racemase (277 aa).

Substrate-binding positions include 25-26 (DS) and 57-58 (YG). Residue Cys-89 is the Proton donor/acceptor of the active site. 90–91 (NT) is a substrate binding site. The active-site Proton donor/acceptor is Cys-204. A substrate-binding site is contributed by 205-206 (TH).

This sequence belongs to the aspartate/glutamate racemases family.

It carries out the reaction L-glutamate = D-glutamate. Its pathway is cell wall biogenesis; peptidoglycan biosynthesis. In terms of biological role, provides the (R)-glutamate required for cell wall biosynthesis. In Brucella ovis (strain ATCC 25840 / 63/290 / NCTC 10512), this protein is Glutamate racemase.